The sequence spans 175 residues: Protein tyrosine phosphatase PRL-1 (175 aa).

A Tyrosine-protein phosphatase domain is found at Lys15–Cys172. Residues Cys53 and Cys114 are joined by a disulfide bond. Asp76 (proton donor) is an active-site residue. Catalysis depends on Cys114, which acts as the Phosphocysteine intermediate. Ala116–Arg120 is a binding site for substrate. A Cysteine methyl ester modification is found at Cys172. A lipid anchor (S-farnesyl cysteine) is attached at Cys172. Positions Val173 to Met175 are cleaved as a propeptide — removed in mature form.

It belongs to the protein-tyrosine phosphatase family.

It is found in the cytoplasm. The protein resides in the mitochondrion matrix. The protein localises to the kinetoplast. It localises to the secreted. Its subcellular location is the extracellular exosome. It carries out the reaction O-phospho-L-tyrosyl-[protein] + H2O = L-tyrosyl-[protein] + phosphate. With respect to regulation, activated in a reduced environment which promotes the reduction of the disulfide bond between the regulatory Cys-53 and catalytic Cys-114 residues. In terms of biological role, has protein tyrosine phosphatase activity and may act as a virulence factor to support intracellular survival in host macrophages. In Leishmania major, this protein is Protein tyrosine phosphatase PRL-1.